Reading from the N-terminus, the 352-residue chain is NAD-dependent protein deacetylase sirtuin-2 (352 aa).

A Phosphoserine modification is found at Ser-16. Residues Arg-20–Lys-301 enclose the Deacetylase sirtuin-type domain. Residues Ala-48–Thr-52 and Asp-58–Arg-60 contribute to the NAD(+) site. Ser-63 is subject to Phosphoserine. Gln-130–Asp-133 provides a ligand contact to NAD(+). The active-site Proton acceptor is His-150. The Zn(2+) site is built by Cys-158 and Cys-163. Ser-170 carries the post-translational modification Phosphoserine. Zn(2+)-binding residues include Cys-184 and Cys-187. Residues Thr-225 to Ser-226, Asn-249 to Glu-251, and Cys-287 contribute to the NAD(+) site. The disordered stretch occupies residues Ser-314–Gln-352. Over residues Pro-324–Lys-333 the composition is skewed to low complexity. Residues Ser-331 and Ser-335 each carry the phosphoserine modification. The segment covering Ala-339 to Gln-352 has biased composition (basic and acidic residues).

Belongs to the sirtuin family. Class I subfamily. As to quaternary structure, interacts with CDC20, FOXO3 and FZR1. Associates with microtubules in primary cortical mature neurons. Homotrimer. Interacts (via both phosphorylated, unphosphorylated, active or inactive forms) with HDAC6; the interaction is necessary for the complex to interact with alpha-tubulin, suggesting that these proteins belong to a large complex that deacetylates the cytoskeleton. Interacts with FOXO1; the interaction is disrupted upon serum-starvation or oxidative stress, leading to increased level of acetylated FOXO1 and induction of autophagy. Interacts with RELA; the interaction occurs in the cytoplasm and is increased in a TNF-alpha-dependent manner. Interacts with HOXA10; the interaction is direct. Interacts with YWHAB and YWHAG; the interactions occur in a AKT-dependent manner and increase SIRT2-dependent TP53 deacetylation. Interacts with MAPK1/ERK2 and MAPK3/ERK1; the interactions increase SIRT2 stability and deacetylation activity. Interacts (phosphorylated form) with KMT5A isoform 2; the interaction is direct, stimulates KMT5A-mediated methyltransferase activity on histone at 'Lys-20' (H4K20me1) and is increased in a H(2)O(2)-induced oxidative stress-dependent manner. Interacts with G6PD; the interaction is enhanced by H(2)O(2) treatment. Interacts with a G1/S-specific cyclin E-CDK2 complex. Interacts with AURKA, CDK5R1 (p35 form) and CDK5 and HIF1A. Interacts with the tRNA ligase SARS1; recruited to the VEGFA promoter via interaction with SARS1. Interacts with BEX4; negatively regulates alpha-tubulin deacetylation by SIRT2. Interacts with MORN3; the interaction enhances the ubiquitination of p53/TP53. Requires Zn(2+) as cofactor. In terms of processing, phosphorylated at phosphoserine and phosphothreonine. Phosphorylated at Ser-331 by a mitotic kinase CDK1/cyclin B at the G2/M transition; phosphorylation regulates the delay in cell-cycle progression. Phosphorylated at Ser-331 by a mitotic kinase G1/S-specific cyclin E/Cdk2 complex; phosphorylation inactivates SIRT2-mediated alpha-tubulin deacetylation and thereby negatively regulates cell adhesion, cell migration and neurite outgrowth during neuronal differentiation. Phosphorylated by cyclin A/Cdk2 and p35-Cdk5 complexes and to a lesser extent by the cyclin D3/Cdk4 and cyclin B/Cdk1, in vitro. Dephosphorylated at Ser-331 by CDC14A and CDC14B around early anaphase. Acetylated by EP300; acetylation leads both to the decreased of SIRT2-mediated alpha-tubulin deacetylase activity and SIRT2-mediated down-regulation of TP53 transcriptional activity. Post-translationally, ubiquitinated.

Its subcellular location is the nucleus. It localises to the cytoplasm. The protein localises to the perinuclear region. The protein resides in the cytoskeleton. It is found in the microtubule organizing center. Its subcellular location is the centrosome. It localises to the centriole. The protein localises to the spindle. The protein resides in the midbody. It is found in the chromosome. Its subcellular location is the perikaryon. It localises to the cell projection. The protein localises to the growth cone. The protein resides in the myelin membrane. The enzyme catalyses N(6)-acetyl-L-lysyl-[protein] + NAD(+) + H2O = 2''-O-acetyl-ADP-D-ribose + nicotinamide + L-lysyl-[protein]. It carries out the reaction N(6)-tetradecanoyl-L-lysyl-[protein] + NAD(+) + H2O = 2''-O-tetradecanoyl-ADP-D-ribose + nicotinamide + L-lysyl-[protein]. It catalyses the reaction N(6)-hexadecanoyl-L-lysyl-[protein] + NAD(+) + H2O = 2''-O-hexadecanoyl-ADP-D-ribose + nicotinamide + L-lysyl-[protein]. Its activity is regulated as follows. Inhibited by Sirtinol, A3 and M15 small molecules. Inhibited by nicotinamide. Inhibited by a macrocyclic peptide inhibitor S2iL5. Inhibited by EP300-induced acetylation. In terms of biological role, NAD-dependent protein deacetylase, which deacetylates internal lysines on histone and alpha-tubulin as well as many other proteins such as key transcription factors. Participates in the modulation of multiple and diverse biological processes such as cell cycle control, genomic integrity, microtubule dynamics, cell differentiation, metabolic networks, and autophagy. Plays a major role in the control of cell cycle progression and genomic stability. Functions in the antephase checkpoint preventing precocious mitotic entry in response to microtubule stress agents, and hence allowing proper inheritance of chromosomes. Positively regulates the anaphase promoting complex/cyclosome (APC/C) ubiquitin ligase complex activity by deacetylating CDC20 and FZR1, then allowing progression through mitosis. Associates both with chromatin at transcriptional start sites (TSSs) and enhancers of active genes. Plays a role in cell cycle and chromatin compaction through epigenetic modulation of the regulation of histone H4 'Lys-20' methylation (H4K20me1) during early mitosis. Specifically deacetylates histone H4 at 'Lys-16' (H4K16ac) between the G2/M transition and metaphase enabling H4K20me1 deposition by KMT5A leading to ulterior levels of H4K20me2 and H4K20me3 deposition throughout cell cycle, and mitotic S-phase progression. Deacetylates KMT5A modulating KMT5A chromatin localization during the mitotic stress response. Also deacetylates histone H3 at 'Lys-57' (H3K56ac) during the mitotic G2/M transition. During oocyte meiosis progression, may deacetylate histone H4 at 'Lys-16' (H4K16ac) and alpha-tubulin, regulating spindle assembly and chromosome alignment by influencing microtubule dynamics and kinetochore function. Deacetylates histone H4 at 'Lys-16' (H4K16ac) at the VEGFA promoter and thereby contributes to regulate expression of VEGFA, a key regulator of angiogenesis. Deacetylates alpha-tubulin at 'Lys-40' and hence controls neuronal motility, oligodendroglial cell arbor projection processes and proliferation of non-neuronal cells. Phosphorylation at Ser-368 by a G1/S-specific cyclin E-CDK2 complex inactivates SIRT2-mediated alpha-tubulin deacetylation, negatively regulating cell adhesion, cell migration and neurite outgrowth during neuronal differentiation. Deacetylates PARD3 and participates in the regulation of Schwann cell peripheral myelination formation during early postnatal development and during postinjury remyelination. Involved in several cellular metabolic pathways. Plays a role in the regulation of blood glucose homeostasis by deacetylating and stabilizing phosphoenolpyruvate carboxykinase PCK1 activity in response to low nutrient availability. Acts as a key regulator in the pentose phosphate pathway (PPP) by deacetylating and activating the glucose-6-phosphate G6PD enzyme, and therefore, stimulates the production of cytosolic NADPH to counteract oxidative damage. Maintains energy homeostasis in response to nutrient deprivation as well as energy expenditure by inhibiting adipogenesis and promoting lipolysis. Attenuates adipocyte differentiation by deacetylating and promoting FOXO1 interaction to PPARG and subsequent repression of PPARG-dependent transcriptional activity. Plays a role in the regulation of lysosome-mediated degradation of protein aggregates by autophagy in neuronal cells. Deacetylates FOXO1 in response to oxidative stress or serum deprivation, thereby negatively regulating FOXO1-mediated autophagy. Deacetylates a broad range of transcription factors and co-regulators regulating target gene expression. Deacetylates transcriptional factor FOXO3 stimulating the ubiquitin ligase SCF(SKP2)-mediated FOXO3 ubiquitination and degradation. Deacetylates HIF1A and therefore promotes HIF1A degradation and inhibition of HIF1A transcriptional activity in tumor cells in response to hypoxia. Deacetylates RELA in the cytoplasm inhibiting NF-kappaB-dependent transcription activation upon TNF-alpha stimulation. Inhibits transcriptional activation by deacetylating p53/TP53 and EP300. Also deacetylates EIF5A. Functions as a negative regulator on oxidative stress-tolerance in response to anoxia-reoxygenation conditions. Plays a role as tumor suppressor. In addition to protein deacetylase activity, also has activity toward long-chain fatty acyl groups and mediates protein-lysine demyristoylation and depalmitoylation of target proteins, such as ARF6 and KRAS, thereby regulating their association with membranes. The chain is NAD-dependent protein deacetylase sirtuin-2 (SIRT2) from Pongo abelii (Sumatran orangutan).